Consider the following 214-residue polypeptide: RING-H2 finger protein ATL67 (214 aa).

Residues 33 to 53 form a helical membrane-spanning segment; the sequence is LGFGYSIAIALGFLVLLSTVL. The segment at 138-180 adopts an RING-type; atypical zinc-finger fold; sequence CSICLCEYKEAEMLRMMPECKHYFHLCCLDAWLKLNGSCPVCR.

The protein belongs to the RING-type zinc finger family. ATL subfamily.

It localises to the membrane. The catalysed reaction is S-ubiquitinyl-[E2 ubiquitin-conjugating enzyme]-L-cysteine + [acceptor protein]-L-lysine = [E2 ubiquitin-conjugating enzyme]-L-cysteine + N(6)-ubiquitinyl-[acceptor protein]-L-lysine.. Its pathway is protein modification; protein ubiquitination. This Arabidopsis thaliana (Mouse-ear cress) protein is RING-H2 finger protein ATL67 (ATL67).